We begin with the raw amino-acid sequence, 293 residues long: Signal recognition particle receptor FtsY (293 aa).

GTP contacts are provided by residues glycine 93–threonine 100, aspartate 175–arginine 179, and threonine 239–aspartate 242.

This sequence belongs to the GTP-binding SRP family. FtsY subfamily. Part of the signal recognition particle protein translocation system, which is composed of SRP and FtsY. SRP is a ribonucleoprotein composed of Ffh and a 4.5S RNA molecule.

It localises to the cell inner membrane. It is found in the cytoplasm. It catalyses the reaction GTP + H2O = GDP + phosphate + H(+). Functionally, involved in targeting and insertion of nascent membrane proteins into the cytoplasmic membrane. Acts as a receptor for the complex formed by the signal recognition particle (SRP) and the ribosome-nascent chain (RNC). Interaction with SRP-RNC leads to the transfer of the RNC complex to the Sec translocase for insertion into the membrane, the hydrolysis of GTP by both Ffh and FtsY, and the dissociation of the SRP-FtsY complex into the individual components. The sequence is that of Signal recognition particle receptor FtsY from Helicobacter pylori (strain ATCC 700392 / 26695) (Campylobacter pylori).